The primary structure comprises 97 residues: Aspartyl/glutamyl-tRNA(Asn/Gln) amidotransferase subunit C (97 aa).

The disordered stretch occupies residues 68 to 97 (ETGFTQEEALSNAPQQSQGQFRTPKVVESA). The segment covering 70 to 88 (GFTQEEALSNAPQQSQGQF) has biased composition (polar residues).

Belongs to the GatC family. In terms of assembly, heterotrimer of A, B and C subunits.

The enzyme catalyses L-glutamyl-tRNA(Gln) + L-glutamine + ATP + H2O = L-glutaminyl-tRNA(Gln) + L-glutamate + ADP + phosphate + H(+). It catalyses the reaction L-aspartyl-tRNA(Asn) + L-glutamine + ATP + H2O = L-asparaginyl-tRNA(Asn) + L-glutamate + ADP + phosphate + 2 H(+). Allows the formation of correctly charged Asn-tRNA(Asn) or Gln-tRNA(Gln) through the transamidation of misacylated Asp-tRNA(Asn) or Glu-tRNA(Gln) in organisms which lack either or both of asparaginyl-tRNA or glutaminyl-tRNA synthetases. The reaction takes place in the presence of glutamine and ATP through an activated phospho-Asp-tRNA(Asn) or phospho-Glu-tRNA(Gln). This Akkermansia muciniphila (strain ATCC BAA-835 / DSM 22959 / JCM 33894 / BCRC 81048 / CCUG 64013 / CIP 107961 / Muc) protein is Aspartyl/glutamyl-tRNA(Asn/Gln) amidotransferase subunit C.